The sequence spans 433 residues: Aspartate--tRNA(Asp/Asn) ligase (433 aa).

Residue Glu-167 coordinates L-aspartate. The aspartate stretch occupies residues Gln-189–Lys-192. An L-aspartate-binding site is contributed by Arg-211. Residues Arg-211–Glu-213, Arg-219–Leu-221, and Glu-356 contribute to the ATP site. Residues Glu-356 and Ser-359 each coordinate Mg(2+). Residues Ser-359 and Arg-363 each coordinate L-aspartate. Gly-404 to Arg-407 lines the ATP pocket.

This sequence belongs to the class-II aminoacyl-tRNA synthetase family. Type 2 subfamily. As to quaternary structure, homodimer. Mg(2+) serves as cofactor.

It localises to the cytoplasm. It carries out the reaction tRNA(Asx) + L-aspartate + ATP = L-aspartyl-tRNA(Asx) + AMP + diphosphate. In terms of biological role, aspartyl-tRNA synthetase with relaxed tRNA specificity since it is able to aspartylate not only its cognate tRNA(Asp) but also tRNA(Asn). Reaction proceeds in two steps: L-aspartate is first activated by ATP to form Asp-AMP and then transferred to the acceptor end of tRNA(Asp/Asn). This is Aspartate--tRNA(Asp/Asn) ligase from Natronomonas pharaonis (strain ATCC 35678 / DSM 2160 / CIP 103997 / JCM 8858 / NBRC 14720 / NCIMB 2260 / Gabara) (Halobacterium pharaonis).